The chain runs to 205 residues: Potassium-transporting ATPase KdpC subunit (205 aa).

A helical membrane pass occupies residues 9-29 (VFAVLFLFILGFVYPTVTSLI).

This sequence belongs to the KdpC family. In terms of assembly, the system is composed of three essential subunits: KdpA, KdpB and KdpC.

It localises to the cell membrane. Functionally, part of the high-affinity ATP-driven potassium transport (or Kdp) system, which catalyzes the hydrolysis of ATP coupled with the electrogenic transport of potassium into the cytoplasm. This subunit acts as a catalytic chaperone that increases the ATP-binding affinity of the ATP-hydrolyzing subunit KdpB by the formation of a transient KdpB/KdpC/ATP ternary complex. This Thermoplasma acidophilum (strain ATCC 25905 / DSM 1728 / JCM 9062 / NBRC 15155 / AMRC-C165) protein is Potassium-transporting ATPase KdpC subunit.